Here is a 438-residue protein sequence, read N- to C-terminus: GTPase Der (438 aa).

2 EngA-type G domains span residues 4–168 and 177–352; these read PIVA…NDPS and IRIA…DNYS. GTP is bound by residues 10-17, 57-61, 120-123, 183-190, 230-234, and 295-298; these read GRPNVGKS, DTGGI, NKID, GKPNVGKS, DTAGL, and NKWD. Residues 353 to 437 form the KH-like domain; the sequence is KRVSTGLLND…GIEIEYRARK (85 aa).

Belongs to the TRAFAC class TrmE-Era-EngA-EngB-Septin-like GTPase superfamily. EngA (Der) GTPase family. Associates with the 50S ribosomal subunit.

Functionally, GTPase that plays an essential role in the late steps of ribosome biogenesis. This Clostridium perfringens (strain ATCC 13124 / DSM 756 / JCM 1290 / NCIMB 6125 / NCTC 8237 / Type A) protein is GTPase Der.